The sequence spans 452 residues: Bifunctional protein GlmU (452 aa).

Residues 1-226 (MSLDIVILAA…AMEVQGANDR (226 aa)) form a pyrophosphorylase region. UDP-N-acetyl-alpha-D-glucosamine-binding positions include 8 to 11 (LAAG), lysine 22, glutamine 73, 78 to 79 (GT), 99 to 101 (YGD), glycine 136, glutamate 151, asparagine 166, and asparagine 224. Mg(2+) is bound at residue aspartate 101. Asparagine 224 contacts Mg(2+). A linker region spans residues 227–247 (IQLAELERHYQLRAARRLMAQ). Residues 248–452 (GVTLRDPARF…IDGWQRPTKK (205 aa)) form an N-acetyltransferase region. UDP-N-acetyl-alpha-D-glucosamine-binding residues include arginine 330 and lysine 348. The active-site Proton acceptor is the histidine 360. The UDP-N-acetyl-alpha-D-glucosamine site is built by tyrosine 363 and asparagine 374. Residues alanine 377, 383–384 (NY), serine 402, alanine 420, and arginine 437 contribute to the acetyl-CoA site.

It in the N-terminal section; belongs to the N-acetylglucosamine-1-phosphate uridyltransferase family. The protein in the C-terminal section; belongs to the transferase hexapeptide repeat family. Homotrimer. Mg(2+) is required as a cofactor.

It localises to the cytoplasm. It carries out the reaction alpha-D-glucosamine 1-phosphate + acetyl-CoA = N-acetyl-alpha-D-glucosamine 1-phosphate + CoA + H(+). The catalysed reaction is N-acetyl-alpha-D-glucosamine 1-phosphate + UTP + H(+) = UDP-N-acetyl-alpha-D-glucosamine + diphosphate. The protein operates within nucleotide-sugar biosynthesis; UDP-N-acetyl-alpha-D-glucosamine biosynthesis; N-acetyl-alpha-D-glucosamine 1-phosphate from alpha-D-glucosamine 6-phosphate (route II): step 2/2. It participates in nucleotide-sugar biosynthesis; UDP-N-acetyl-alpha-D-glucosamine biosynthesis; UDP-N-acetyl-alpha-D-glucosamine from N-acetyl-alpha-D-glucosamine 1-phosphate: step 1/1. Its pathway is bacterial outer membrane biogenesis; LPS lipid A biosynthesis. In terms of biological role, catalyzes the last two sequential reactions in the de novo biosynthetic pathway for UDP-N-acetylglucosamine (UDP-GlcNAc). The C-terminal domain catalyzes the transfer of acetyl group from acetyl coenzyme A to glucosamine-1-phosphate (GlcN-1-P) to produce N-acetylglucosamine-1-phosphate (GlcNAc-1-P), which is converted into UDP-GlcNAc by the transfer of uridine 5-monophosphate (from uridine 5-triphosphate), a reaction catalyzed by the N-terminal domain. The polypeptide is Bifunctional protein GlmU (Stutzerimonas stutzeri (strain A1501) (Pseudomonas stutzeri)).